Reading from the N-terminus, the 314-residue chain is tRNA pseudouridine synthase B (314 aa).

Position 43 (histidine 43) interacts with substrate. Aspartate 48 functions as the Nucleophile in the catalytic mechanism. Substrate contacts are provided by tyrosine 76, tyrosine 179, and leucine 200.

The protein belongs to the pseudouridine synthase TruB family. Type 1 subfamily.

It carries out the reaction uridine(55) in tRNA = pseudouridine(55) in tRNA. In terms of biological role, responsible for synthesis of pseudouridine from uracil-55 in the psi GC loop of transfer RNAs. The chain is tRNA pseudouridine synthase B from Cronobacter sakazakii (strain ATCC BAA-894) (Enterobacter sakazakii).